A 314-amino-acid polypeptide reads, in one-letter code: tRNA dimethylallyltransferase (314 aa).

11–18 provides a ligand contact to ATP; the sequence is GPTGSGKT. Residue 13–18 participates in substrate binding; sequence TGSGKT. The interaction with substrate tRNA stretch occupies residues 36 to 39; that stretch reads DSMQ.

It belongs to the IPP transferase family. As to quaternary structure, monomer. The cofactor is Mg(2+).

It carries out the reaction adenosine(37) in tRNA + dimethylallyl diphosphate = N(6)-dimethylallyladenosine(37) in tRNA + diphosphate. In terms of biological role, catalyzes the transfer of a dimethylallyl group onto the adenine at position 37 in tRNAs that read codons beginning with uridine, leading to the formation of N6-(dimethylallyl)adenosine (i(6)A). The sequence is that of tRNA dimethylallyltransferase from Chlamydia muridarum (strain MoPn / Nigg).